A 154-amino-acid chain; its full sequence is MAASRALSLTAEAVRAVIPRRSGRLLAVFPRLLTRWETTSSIPEAGEGQIRLTDSCVQRLLEITEGSEFLRLQVEGGGCSGFQYKFSLDTVINPDDRVFEQGGARVVVDSDSLAFVKGAQVDFSQELIRSSFQVLNNPQAQQGCSCGSSFSVKV.

The N-terminal 8 residues, 1–8, are a transit peptide targeting the mitochondrion; it reads MAASRALS. Positions 79, 144, and 146 each coordinate Fe cation.

The protein belongs to the HesB/IscA family. As to quaternary structure, heterotetramer; forms a dimer of dimers with IBA57. Interacts with [2Fe-2S]-ISCA2 forming the heterodimer [2Fe- 2S]-ISCA2-IBA57 complex; [2Fe-2S] cluster binding is absolutely required to promote the complex formation.

It localises to the mitochondrion. Its function is as follows. Involved in the maturation of mitochondrial 4Fe-4S proteins functioning late in the iron-sulfur cluster assembly pathway. May be involved in the binding of an intermediate of Fe/S cluster assembly. This Mus musculus (Mouse) protein is Iron-sulfur cluster assembly 2 homolog, mitochondrial (Isca2).